The following is a 366-amino-acid chain: Zinc finger CCCH domain-containing protein 11 (366 aa).

Residues 43–66 (LHQAVQPKPDPTKTAAKKKKEEEK) form a disordered region. Residues 54–79 (TKTAAKKKKEEEKAREKELNDLFKVA) are a coiled coil. 2 consecutive C3H1-type zinc fingers follow at residues 90-117 (DPKSIVCEFFKVGQCQKGFKCKFSHDLN) and 160-198 (KPTDIVCKYFLDAVEKKQYGWFWVCPNGGKDCHYRHALP). Positions 208–234 (KALLEEESEKIAIEDEIEDQRKKVKTT) form a coiled coil. The disordered stretch occupies residues 293–338 (YERQEESEANEEPSNKNQDEGPSSSTSNGKEVEESDDEDINIDDDL). Residues 312–321 (EGPSSSTSNG) are compositionally biased toward polar residues. Acidic residues predominate over residues 325–338 (EESDDEDINIDDDL).

The protein is Zinc finger CCCH domain-containing protein 11 of Oryza sativa subsp. japonica (Rice).